A 379-amino-acid chain; its full sequence is Cytochrome b (379 aa).

Transmembrane regions (helical) follow at residues 33 to 53 (FGSL…FLAM), 77 to 98 (WLIR…YLHI), 113 to 133 (WNVG…GYVL), and 178 to 198 (FFAF…VHLI). Positions 83 and 97 each coordinate heme b. Heme b contacts are provided by His182 and His196. His201 is a binding site for a ubiquinone. Helical transmembrane passes span 226–246 (YKDI…ALFS), 288–308 (LGGV…PLLH), 320–340 (FTQV…WIGG), and 347–367 (FIII…VLAP).

The protein belongs to the cytochrome b family. As to quaternary structure, the cytochrome bc1 complex contains 3 respiratory subunits (MT-CYB, CYC1 and UQCRFS1), 2 core proteins (UQCRC1 and UQCRC2) and probably 6 low-molecular weight proteins. The cofactor is heme b.

It localises to the mitochondrion inner membrane. Its function is as follows. Component of the ubiquinol-cytochrome c reductase complex (complex III or cytochrome b-c1 complex) that is part of the mitochondrial respiratory chain. The b-c1 complex mediates electron transfer from ubiquinol to cytochrome c. Contributes to the generation of a proton gradient across the mitochondrial membrane that is then used for ATP synthesis. This is Cytochrome b (mt-cyb) from Poeciliopsis occidentalis (Gila topminnow).